The sequence spans 110 residues: Parvalbumin alpha (110 aa).

EF-hand domains are found at residues 39-74 and 78-110; these read KNAKDVEAVFYILDKDKSGFIEEDELKSVLKCFAPE and LSEKETKDLLTAGDEDGDGKIGVSEFIQLVANS. 11 residues coordinate Ca(2+): D52, D54, S56, F58, E60, E63, D91, D93, D95, K97, and E102.

The protein belongs to the parvalbumin family.

Its function is as follows. In muscle, parvalbumin is thought to be involved in relaxation after contraction. It binds two calcium ions. This Callorhinchus milii (Ghost shark) protein is Parvalbumin alpha.